Consider the following 106-residue polypeptide: Cuticle protein CP14.6 (106 aa).

The first 16 residues, 1-16 (MKSFFVVALLVAAAAA), serve as a signal peptide directing secretion. The Chitin-binding type R&amp;R domain occupies 37 to 106 (PQHYSYSVET…PQGAHLPVAA (70 aa)).

Its function is as follows. Component of the cuticle of tobacco hornworm. The chain is Cuticle protein CP14.6 (CP14.6) from Manduca sexta (Tobacco hawkmoth).